The chain runs to 131 residues: MSNGTDSKTASAPPARSGGGFGGGGSRGGDRGDRGDRGGDRGDRGGGLGGDDDKRGGGRGFGRKKVCRFCAEKNASVDFKDQATLKYFVTERGKIIPRRISGNCAKHQREVAVAIKRARGIALLPYNAVVG.

Polar residues predominate over residues methionine 1–alanine 10. Residues methionine 1–glycine 60 form a disordered region. The segment covering serine 17 to arginine 27 has biased composition (gly residues). The segment covering glycine 28 to arginine 44 has biased composition (basic and acidic residues).

It belongs to the bacterial ribosomal protein bS18 family. In terms of assembly, part of the 30S ribosomal subunit. Forms a tight heterodimer with protein bS6.

In terms of biological role, binds as a heterodimer with protein bS6 to the central domain of the 16S rRNA, where it helps stabilize the platform of the 30S subunit. This is Small ribosomal subunit protein bS18 from Myxococcus xanthus (strain DK1622).